The following is a 259-amino-acid chain: 3-deoxy-manno-octulosonate cytidylyltransferase (259 aa).

The protein belongs to the KdsB family.

It localises to the cytoplasm. The enzyme catalyses 3-deoxy-alpha-D-manno-oct-2-ulosonate + CTP = CMP-3-deoxy-beta-D-manno-octulosonate + diphosphate. It functions in the pathway nucleotide-sugar biosynthesis; CMP-3-deoxy-D-manno-octulosonate biosynthesis; CMP-3-deoxy-D-manno-octulosonate from 3-deoxy-D-manno-octulosonate and CTP: step 1/1. The protein operates within bacterial outer membrane biogenesis; lipopolysaccharide biosynthesis. Activates KDO (a required 8-carbon sugar) for incorporation into bacterial lipopolysaccharide in Gram-negative bacteria. The polypeptide is 3-deoxy-manno-octulosonate cytidylyltransferase (Nitrosococcus oceani (strain ATCC 19707 / BCRC 17464 / JCM 30415 / NCIMB 11848 / C-107)).